We begin with the raw amino-acid sequence, 165 residues long: NADH-quinone oxidoreductase subunit I (165 aa).

4Fe-4S ferredoxin-type domains follow at residues 66–98 (HRLTKNEKGDLKCVACDMCATACPANCIFITAT) and 109–138 (SKFTIDLLECVFCGLCVEACPKDAIRMDTG). [4Fe-4S] cluster contacts are provided by C78, C81, C84, C88, C118, C121, C124, and C128.

It belongs to the complex I 23 kDa subunit family. NDH-1 is composed of 14 different subunits. Subunits NuoA, H, J, K, L, M, N constitute the membrane sector of the complex. It depends on [4Fe-4S] cluster as a cofactor.

It is found in the cell inner membrane. The catalysed reaction is a quinone + NADH + 5 H(+)(in) = a quinol + NAD(+) + 4 H(+)(out). Its function is as follows. NDH-1 shuttles electrons from NADH, via FMN and iron-sulfur (Fe-S) centers, to quinones in the respiratory chain. The immediate electron acceptor for the enzyme in this species is believed to be ubiquinone. Couples the redox reaction to proton translocation (for every two electrons transferred, four hydrogen ions are translocated across the cytoplasmic membrane), and thus conserves the redox energy in a proton gradient. This chain is NADH-quinone oxidoreductase subunit I, found in Campylobacter fetus subsp. fetus (strain 82-40).